The chain runs to 592 residues: Arginine--tRNA ligase (592 aa).

Residues 112–122 (VNPNKELHVGH) carry the 'HIGH' region motif.

The protein belongs to the class-I aminoacyl-tRNA synthetase family. In terms of assembly, monomer.

The protein resides in the cytoplasm. The enzyme catalyses tRNA(Arg) + L-arginine + ATP = L-arginyl-tRNA(Arg) + AMP + diphosphate. This is Arginine--tRNA ligase from Thermus thermophilus (strain ATCC BAA-163 / DSM 7039 / HB27).